The following is a 1508-amino-acid chain: MSELKPIEIKEDAKPRDFEAFQLRLASPDRIKAWSHGEVKKPETINYRTLKPERDGLFCAKIFGPIRDYECLCGKYKKMRYKGIKCEKCGVEVTTSKVRRSRMGHIELVTPVAHIWYVNSLPSRIGTLLGIKMKDLERVLYYEAYIVENPGDAFYDNENSKKVDLYDVLNEEQYVLLEQKFSESGFKARMGGEVIRDLLASLDLVSILDQLKIEIESTNSEAKKKTIVKRLKVVESFLNSGNRPEWMMITNLPVLPPDLRPLVSLDGGKFAVSDVNDLYRRVINRNTRLKRLMELDAPEIIIRNEKRMLQEAVDALFDNGRRANAVKGANKRPLKSLSEIIKGKQGRFRQNLLGKRVDFSGRSVIVVGPKLRMDQCGLPKKMALELFKPHLLARLEEKGYATTVKQAKKMIEDKTNEVWECLEEVVADHPVMLNRAPTLHKMSIQAFHPVLIEGKAIQLHPLVCSAFNADFDGDQMAVHVPLSQEAIAECKILMLSSMNILLPASGKAVTVPSQDMVLGIYYLSLEKNEAVGANKIFASVDEVMIAVEAHYLDLHAKIKTMVEGRTVFTTAGRLIIKSILPNLKENSVPESMWNKVMKKKDIANLVDYVYKNGGLEVTAGFLDKLKNLGFRYATKAGISISIADIIIPESKYSYVDEAKKRVREIQNQYGSGLLTDSERYNKIVDIWTDTNNKVAAEMMKLIKTDKSGFNSIYMMADSGARGSAAQIRQLAGMRGLMAKPDGSIIETPITSNFREGLNVLEYFISTHGARKGLADTALKTANAGYLTRKLIDVAQNVKVTMDDCGTHEGVEITEITENGELIESLEERVLGRVLSDDVIDPITNEILFTEGTLIDEVKARTITDAGIKSVSIRTPITCKASKGVCSKCYGINLGEGKLVKPGEAVGIISAQSIGEPGTQLTLRTFHIGGTASTEQQDRQVVAQKEGFIRYYNLKTYENNNKFIVTNRRNAAILLVEPKIKAPFDGEINIEVAHEDINVIIKGKSDEVKYVLRKHDLAKPNELAGVSGKVEGKFYIPYIKGDKVKENESIVEVIKEGWNVPNRIPFASEVKVADGDPVTQDILSGANGVLKFYILKGDYLERIKNVKKGDMVSEKGLFVVIADDDDREAVRHYIPRNSVIKFNDSDIVSAKDTIAKPQDGSKLVIAEWDPYSTPVIAEEAGTVAYEDIEPGYSVAEQYDEATGESRLVINEYLPSGVKPTIVISTKSGKLIRYQLEPKTAIFVKDGAEVSRADTIAKTPKAVAKSKDITGGLPRVSELFEARRPKNTAIIAEIDGTIKFDKPLRSKERIIIMAEDGSSAEYLIDKSRQIQVRDGEFVHAGEKLTDGLVSSHDVLRILGEKALHYYLISEIQQVYRSQGVAISDKHIEIIVSQMLRQVKIVDSGHTNFIVGDMVSRRKFREENDRIMKIGGEPAIAEPVLLGVTRAAIGSDSVISAASFQETTKVLTEASIAAKFDYLEDLKENVILGRMIPVGTGLYQDKKVKIKINED.

Residues Cys71, Cys73, Cys86, and Cys89 each coordinate Zn(2+). 3 residues coordinate Mg(2+): Asp470, Asp472, and Asp474. Zn(2+) is bound by residues Cys804, Cys878, Cys885, and Cys888.

Belongs to the RNA polymerase beta' chain family. In terms of assembly, the RNAP catalytic core consists of 2 alpha, 1 beta, 1 beta' and 1 omega subunit. When a sigma factor is associated with the core the holoenzyme is formed, which can initiate transcription. It depends on Mg(2+) as a cofactor. Zn(2+) is required as a cofactor.

The catalysed reaction is RNA(n) + a ribonucleoside 5'-triphosphate = RNA(n+1) + diphosphate. In terms of biological role, DNA-dependent RNA polymerase catalyzes the transcription of DNA into RNA using the four ribonucleoside triphosphates as substrates. In Campylobacter fetus subsp. fetus (strain 82-40), this protein is DNA-directed RNA polymerase subunit beta'.